The sequence spans 160 residues: MIP18 family protein F45G2.10 (160 aa).

The interval 1–32 is disordered; the sequence is MGQERLDNANPTLFDSKPRHRPVTGTERDESV.

It belongs to the MIP18 family.

May play a role in chromosome segregation through establishment of sister chromatid cohesion. The chain is MIP18 family protein F45G2.10 from Caenorhabditis elegans.